The following is a 376-amino-acid chain: MSRLQFQLQTRDGRARRGRLTFPRGTVETPAFMPVGTYGSVKGILPDDVRALGAEIILGNTFHLYLRPGLDIIADHGGLHGFCRWDGPILTDSGGFQVFSLAHRRKITEQGVTFASPTDGARVFLGPEESMKIQKVLDSDVVMIFDECTPYPATEDVARRSMELSLRWAQRSRNAHDELGNDAALFGIVQGGVHTDLRSRSAEALQAIGFDGYAVGGLAVGEPEHERNAMLDHLDPELPSDRPRYLMGVGRPEDLVEGVARGVDMFDCVMPTRNARNGHYFTSFGTVRIRNSQYARDMDPIEPGCGCVACTGGYTRSYLRHLDRCNEMLAPMLGTLHNLFYYEKLMADIRAAIEAGTFLAFRESFYAARGAVAPPL.

Asp-92 (proton acceptor) is an active-site residue. Residues 92-96, Asp-146, Gln-190, and Gly-217 each bind substrate; that span reads DSGGF. The RNA binding stretch occupies residues 248–254; the sequence is GVGRPED. The active-site Nucleophile is Asp-267. The segment at 272 to 276 is RNA binding; important for wobble base 34 recognition; the sequence is TRNAR. 4 residues coordinate Zn(2+): Cys-305, Cys-307, Cys-310, and His-337.

Belongs to the queuine tRNA-ribosyltransferase family. As to quaternary structure, homodimer. Within each dimer, one monomer is responsible for RNA recognition and catalysis, while the other monomer binds to the replacement base PreQ1. Zn(2+) is required as a cofactor.

The enzyme catalyses 7-aminomethyl-7-carbaguanine + guanosine(34) in tRNA = 7-aminomethyl-7-carbaguanosine(34) in tRNA + guanine. The protein operates within tRNA modification; tRNA-queuosine biosynthesis. In terms of biological role, catalyzes the base-exchange of a guanine (G) residue with the queuine precursor 7-aminomethyl-7-deazaguanine (PreQ1) at position 34 (anticodon wobble position) in tRNAs with GU(N) anticodons (tRNA-Asp, -Asn, -His and -Tyr). Catalysis occurs through a double-displacement mechanism. The nucleophile active site attacks the C1' of nucleotide 34 to detach the guanine base from the RNA, forming a covalent enzyme-RNA intermediate. The proton acceptor active site deprotonates the incoming PreQ1, allowing a nucleophilic attack on the C1' of the ribose to form the product. After dissociation, two additional enzymatic reactions on the tRNA convert PreQ1 to queuine (Q), resulting in the hypermodified nucleoside queuosine (7-(((4,5-cis-dihydroxy-2-cyclopenten-1-yl)amino)methyl)-7-deazaguanosine). The chain is Queuine tRNA-ribosyltransferase from Stenotrophomonas maltophilia (strain K279a).